Consider the following 530-residue polypeptide: MSVEALGNTGMEPPFTKRNPALRLVDLAGAHHPHHHHHPPHLPQSVTGYPGYVAHSHSMAHVHPGEFAADSRLGPSAAFRTEHIGHPGALKLSPAHNPHHRHHHHHHHHHHMAGHAEVASSQTGAFGPAQSPAGSYSSLPHPAQAICAAGRDWLIGRDVTVPVMPGLTEQHSPSHHGMFLSTTGSYHGHHTEAGSHPYFSGAPEQASHATPGGQPLNGHIRLGLPGDMYTRSDHFSQPVTRTDHFASPSLHNYCGMNLNMNITPHHHGPGAFFRYMRQAIKQELICKWIEEDQLPKKLCSKTFSTMHELVTHVTVEHVGGPEQSNHICFWEECPREGKPFKAKYKLVNHIRVHTGEKPFPCPFPGCGKVFARSENLKIHKRTHTGEKPFKCEFEGCDRRFANSSDRKKHSHVHTSDKPYNCKVRGCDKSYTHPSSLRKHMKVHCKSPPPSSGYESSIPSLVSPSSDSGQDPGATSSQPEPPTSSQGANLSEWYVCQQGSAASGIPTPPGNTPSPEHRKPSYSNWQATNTF.

2 stretches are compositionally biased toward basic residues: residues 31-40 (HHPHHHHHPP) and 97-113 (NPHH…HHMA). Disordered stretches follow at residues 31–50 (HHPH…TGYP) and 87–138 (PGAL…SYSS). A C2H2-type 1; atypical zinc finger spans residues 284 to 317 (LICKWIEEDQLPKKLCSKTFSTMHELVTHVTVEH). The C2H2-type 2; atypical zinc finger occupies 326 to 353 (HICFWEECPREGKPFKAKYKLVNHIRVH). C2H2-type zinc fingers lie at residues 359–383 (FPCP…KRTH), 389–413 (FKCE…SHVH), and 419–443 (YNCK…MKVH). Residues 432–530 (HPSSLRKHMK…YSNWQATNTF (99 aa)) are disordered. A compositionally biased stretch (basic residues) spans 435–444 (SLRKHMKVHC). Low complexity-rich tracts occupy residues 455 to 467 (SSIP…SSDS) and 474 to 485 (TSSQPEPPTSSQ). Residues 520-530 (SYSNWQATNTF) are compositionally biased toward polar residues.

The protein belongs to the GLI C2H2-type zinc-finger protein family. In terms of tissue distribution, at mid-gastrula stage (stage 11.5), weakly expressed in the prospective neural fold. Expressed in the neural plate border region at early neurula stage (stage 15) with strongest expression in the prospective regions of the hyoid and branchial crests. Expression in the dorsal central nervous system (CNS) continues through late neurula stage and early tail bud stages with expression strongest in the olfactory placode and expression levels increasing as development progresses. Becomes expressed in somites.

Its subcellular location is the nucleus. May bind to DNA. Induces neural and neural crest differentiation. Does not induce anterior neural tissue. This chain is Zinc finger protein ZIC 4 (zic4), found in Xenopus laevis (African clawed frog).